A 720-amino-acid polypeptide reads, in one-letter code: Glutaryl-7-aminocephalosporanic-acid acylase (720 aa).

Positions 1-29 (MLRVLHRAASALVMATVIGLAPGVAFALA) are cleaved as a signal peptide. Positions 188–198 (EGDPPDLADQG) are cleaved as a propeptide — spacer peptide. Serine 199 acts as the Nucleophile in catalysis. Active-site residues include histidine 221 and glutamate 653.

Belongs to the peptidase S45 family. Heterodimer of a small subunit and a large subunit processed from the same precursor.

The protein localises to the periplasm. The catalysed reaction is (7R)-7-(4-carboxybutanamido)cephalosporanate + H2O = (7R)-7-aminocephalosporanate + glutarate. Functionally, catalyzes the deacylation of 7 beta-(4-carboxybutanamido)cephalosporanic acid (glutaryl-7-aminocephalosporanic acid or GL-7-ACA) to 7-aminocephalosporanic acid (7-ACA). Cannot efficiently use cephalosporin C (CPC), penicillin G, or ampicillin as substrates. The sequence is that of Glutaryl-7-aminocephalosporanic-acid acylase from Brevundimonas diminuta (Pseudomonas diminuta).